Here is an 80-residue protein sequence, read N- to C-terminus: Defensin coprisin (80 aa).

An N-terminal signal peptide occupies residues 1 to 20 (MAKLIAFALVASLCLSMVLC). Residues 21 to 37 (NPLPEEVQEEGLVRQKR) constitute a propeptide that is removed on maturation. 3 cysteine pairs are disulfide-bonded: Cys-40-Cys-71, Cys-57-Cys-76, and Cys-61-Cys-78.

The protein belongs to the invertebrate defensin family. Type 1 subfamily.

Its subcellular location is the secreted. The protein localises to the target cell membrane. Functionally, potent broad-spectrum antibacterial peptide against both Gram-positive (B.subtilis, S.epidermidis, and S.aureus) and Gram-negative bacteria (E.coli, S.typhimurium, and P.aeruginosa). Is also active against all antibiotic-resistant bacterial strains tested. Induces apoptosis in C.albicans, but does not disrupt the fungal plasma membrane at all. Acts by permeabilizing the bacterial cell membrane, but not human membranes. Also shows potent anti-inflammatory activities, since it reduces both LPS-induced nitric oxide release and pro-inflammatory cytokine production. Anti-inflammatory activities are initiated by suppressing the binding of LPS to toll-like receptor 4 (TLR4), and subsequently inhibiting the phosphorylation of p38 mitogen-activated protein kinase (MAPK) and nuclear translocation of NF-kB (TNFRSF11A). Does not show hemolytic activity against human erythrocytes. This Copris tripartitus (Dung beetle) protein is Defensin coprisin.